The chain runs to 564 residues: Laccase-22 (564 aa).

Residues 1–25 form the signal peptide; sequence MAVLPESRRLSLLLMAACFLLQALS. 2 consecutive Plastocyanin-like domains span residues 36-152 and 162-314; these read NVVM…PKLG and KEAV…YANT. 2 N-linked (GlcNAc...) asparagine glycosylation sites follow: Asn41 and Asn82. Cu cation-binding residues include His86 and His88. Asn118 is a glycosylation site (N-linked (GlcNAc...) asparagine). The Cu cation site is built by His131 and His133. N-linked (GlcNAc...) asparagine glycosylation is found at Asn191, Asn302, Asn331, Asn379, Asn389, Asn424, Asn437, and Asn447. The Plastocyanin-like 3 domain occupies 414–548; that stretch reads DFPATPLHKF…KMAFVVDNGK (135 aa). Cu cation-binding residues include His465, His468, His470, His527, Cys528, His529, and His533.

The protein belongs to the multicopper oxidase family. Cu cation is required as a cofactor.

It localises to the secreted. Its subcellular location is the extracellular space. The protein resides in the apoplast. It catalyses the reaction 4 hydroquinone + O2 = 4 benzosemiquinone + 2 H2O. In terms of biological role, lignin degradation and detoxification of lignin-derived products. This Oryza sativa subsp. japonica (Rice) protein is Laccase-22 (LAC22).